A 387-amino-acid chain; its full sequence is Phosphoglycerate kinase (387 aa).

Substrate-binding positions include 21–23 (DLN), arginine 36, 59–62 (HLGR), arginine 113, and arginine 146. ATP-binding positions include lysine 197, glutamate 314, and 340 to 343 (GGDT).

Belongs to the phosphoglycerate kinase family. In terms of assembly, monomer.

Its subcellular location is the cytoplasm. It catalyses the reaction (2R)-3-phosphoglycerate + ATP = (2R)-3-phospho-glyceroyl phosphate + ADP. It participates in carbohydrate degradation; glycolysis; pyruvate from D-glyceraldehyde 3-phosphate: step 2/5. The sequence is that of Phosphoglycerate kinase from Pectobacterium atrosepticum (strain SCRI 1043 / ATCC BAA-672) (Erwinia carotovora subsp. atroseptica).